Consider the following 333-residue polypeptide: Cytosolic sulfotransferase 10 (333 aa).

Position 76–81 (76–81 (KSGTTW)) interacts with 3'-phosphoadenylyl sulfate. H146 acts as the Proton acceptor in catalysis. 3'-phosphoadenylyl sulfate is bound by residues R168, S176, Y234, and 299–301 (RKG).

Belongs to the sulfotransferase 1 family. Expressed in roots.

It is found in the cytoplasm. Sulfotransferase that utilizes 3'-phospho-5'-adenylyl sulfate (PAPS) as sulfonate donor to specifically catalyze the sulfate conjugation of brassinosteroids, including castasterone (CS), brassinolide (BL), related 24-epimers, and the naturally occurring (22R, 23R)-28-homobrassinosteroids. No activity on phenolic acids, desulfo-glucosinolates, flavonoids, steroids, gibberellic acids, cytokinins, phenylpropanoids, hydroxyjasmonates and coumarins. This is Cytosolic sulfotransferase 10 (SOT10) from Arabidopsis thaliana (Mouse-ear cress).